Here is a 191-residue protein sequence, read N- to C-terminus: CASP-like protein 2U3 (191 aa).

Over 1–25 (MGAYDGAEAPRAAPASTAANSRPSR) the chain is Cytoplasmic. A helical membrane pass occupies residues 26-46 (LLLLHSLLLRLVAVVVSILVI). Topologically, residues 47–68 (AVMVHAKQRVMIFKAEWDNSKA) are extracellular. The chain crosses the membrane as a helical span at residues 69 to 89 (FVALVAISAICLGYSFLQFIL). The Cytoplasmic portion of the chain corresponds to 90–114 (SAFHLCSKSWKSPTKCWAWMNFIAD). Residues 115-135 (QILTYAMLGAAAAAAELAYIA) form a helical membrane-spanning segment. The Extracellular segment spans residues 136 to 157 (KNGSSRAQWQPICSTFNTFCTR). The N-linked (GlcNAc...) asparagine glycan is linked to asparagine 137. The chain crosses the membrane as a helical span at residues 158 to 178 (AGASIILSFIAVLALANSSAI). At 179–191 (SAYHLFRRPSSSV) the chain is on the cytoplasmic side.

The protein belongs to the Casparian strip membrane proteins (CASP) family. Homodimer and heterodimers.

It is found in the cell membrane. The polypeptide is CASP-like protein 2U3 (Selaginella moellendorffii (Spikemoss)).